A 703-amino-acid polypeptide reads, in one-letter code: RING finger protein 214 (703 aa).

3 disordered regions span residues M1–K59, G104–S134, and S146–L197. At A2 the chain carries N-acetylalanine. S15, S40, S47, and S54 each carry phosphoserine. Positions T37–K59 are enriched in polar residues. Residues S176 and S196 each carry the phosphoserine modification. Residues Q220 to T379 adopt a coiled-coil conformation. Residues F486–V552 form a disordered region. The span at L493–P504 shows a compositional bias: low complexity. Phosphoserine occurs at positions 497, 511, and 516. Residues P523 to G536 are compositionally biased toward pro residues. The RING-type; atypical zinc-finger motif lies at C658–P700.

The polypeptide is RING finger protein 214 (RNF214) (Homo sapiens (Human)).